A 491-amino-acid chain; its full sequence is Probable malate:quinone oxidoreductase (491 aa).

This sequence belongs to the MQO family. It depends on FAD as a cofactor.

It catalyses the reaction (S)-malate + a quinone = a quinol + oxaloacetate. It participates in carbohydrate metabolism; tricarboxylic acid cycle; oxaloacetate from (S)-malate (quinone route): step 1/1. This chain is Probable malate:quinone oxidoreductase, found in Actinobacillus pleuropneumoniae serotype 5b (strain L20).